We begin with the raw amino-acid sequence, 499 residues long: MSSTISLKPTHLILSSFSTGKVLQFRRSRFSHTPSSSSSRYRTLVAQLGFRPDSFDFIKDHAENLLYTIADAAVSSSETFESVAGTTTKTTQSNDWFSGIANYMETILKVLKDGLSTVHVPYSYGFAIILLTVLVKAATFPLTKKQVESAMAMKSLTPQIKAIQERYAGDQEKIQLETARLYKLAGINPLAGCLPTLATIPVWIGLYRALSNVADEGLLTEGFFWIPSLAGPTTVAARQNGSGISWLFPFIEGHPPLGWPDTLAYLVLPLLLVFSQYLSIQIMQSSQSNDPAMKSSQAVTKLLPLMIGYFALSVPSGLSLYWLTNNILSTAQQVWLQKYGGAKNPVEKFTNLVTKEDKTQQIEKSFSEPLVQKSVSELKIPREKGGEKVTPECPKPGERFRLLKEQEAKRRREKEERQKAEAALSNQNTDKAHEQDEKSDTAIVAEDDKKTELSAVDETSDGTVAVNGKPSIQKDETTNGTFGIGHDTEQQHSHETEKR.

A chloroplast-targeting transit peptide spans 1 to 45 (MSSTISLKPTHLILSSFSTGKVLQFRRSRFSHTPSSSSSRYRTLV). Helical transmembrane passes span 115–135 (LSTVHVPYSYGFAIILLTVLV), 184–204 (LAGINPLAGCLPTLATIPVWI), 263–283 (LAYLVLPLLLVFSQYLSIQIM), and 302–322 (LLPLMIGYFALSVPSGLSLYW). The tract at residues 378-499 (LKIPREKGGE…QQHSHETEKR (122 aa)) is disordered. 3 stretches are compositionally biased toward basic and acidic residues: residues 379 to 420 (KIPR…RQKA), 430 to 452 (DKAHEQDEKSDTAIVAEDDKKTE), and 486 to 499 (HDTEQQHSHETEKR). A coiled-coil region spans residues 397-436 (GERFRLLKEQEAKRRREKEERQKAEAALSNQNTDKAHEQD).

The protein belongs to the OXA1/ALB3/YidC (TC 2.A.9.2) family. In terms of assembly, homodimer. Interacts with ALB3. Interacts with STIC2. Highly expressed in green tissues.

The protein localises to the plastid. The protein resides in the chloroplast thylakoid membrane. Its function is as follows. Required for the insertion of some light harvesting chlorophyll-binding proteins (LHCP) into the chloroplast thylakoid membrane. Plays a role in the accumulation of some cytochrome b6f components in the thylakoid membrane. Required for the assembly and/or stability of the F(1)F(0) ATP synthase in chloroplast thylakoid membranes. Functions to stabilize or promote assembly of F(1) during its attachment to the membrane-embedded F(0) part. Participates with STIC2 in thylakoid protein targeting. May function with a specific subset of thylakoidal proteins. The sequence is that of ALBINO3-like protein 1, chloroplastic from Arabidopsis thaliana (Mouse-ear cress).